Consider the following 200-residue polypeptide: MQGFKQHTGLVVPLDAANVDTDAIIPKQFLQKVSRLGFGKHLFHDWRFLDDAGEQPNPEFVMNHARYQGASILLARENFGCGSSREHAPWALADYGIRAMIAPSFADIFYSNSINNQMVPVRLTEQEVDELFQYVQATEGAQIEVDLEALKVRANDKEYSFGIDDFRRHCLLNGLDHIGLTLQHEDKIAAFEADIPAFLR.

Belongs to the LeuD family. LeuD type 1 subfamily. In terms of assembly, heterodimer of LeuC and LeuD.

The catalysed reaction is (2R,3S)-3-isopropylmalate = (2S)-2-isopropylmalate. It functions in the pathway amino-acid biosynthesis; L-leucine biosynthesis; L-leucine from 3-methyl-2-oxobutanoate: step 2/4. Its function is as follows. Catalyzes the isomerization between 2-isopropylmalate and 3-isopropylmalate, via the formation of 2-isopropylmaleate. This chain is 3-isopropylmalate dehydratase small subunit, found in Vibrio vulnificus (strain CMCP6).